A 55-amino-acid polypeptide reads, in one-letter code: Large ribosomal subunit protein bL33 (55 aa).

The protein belongs to the bacterial ribosomal protein bL33 family.

The sequence is that of Large ribosomal subunit protein bL33 from Dinoroseobacter shibae (strain DSM 16493 / NCIMB 14021 / DFL 12).